We begin with the raw amino-acid sequence, 427 residues long: Histidine--tRNA ligase (427 aa).

This sequence belongs to the class-II aminoacyl-tRNA synthetase family. In terms of assembly, homodimer.

Its subcellular location is the cytoplasm. It carries out the reaction tRNA(His) + L-histidine + ATP = L-histidyl-tRNA(His) + AMP + diphosphate + H(+). The chain is Histidine--tRNA ligase from Aster yellows witches'-broom phytoplasma (strain AYWB).